The following is a 219-amino-acid chain: Pyridoxine/pyridoxamine 5'-phosphate oxidase (219 aa).

Substrate is bound by residues 15–18 (RRDY) and Lys73. Residues 68-73 (RMVLLK), 83-84 (YT), Arg89, Lys90, and Gln112 each bind FMN. Residues Tyr130, Arg134, and Ser138 each contribute to the substrate site. Residues 147-148 (QS) and Trp192 contribute to the FMN site. Residue 198-200 (RLH) participates in substrate binding. An FMN-binding site is contributed by Arg202.

It belongs to the pyridoxamine 5'-phosphate oxidase family. In terms of assembly, homodimer. It depends on FMN as a cofactor.

The enzyme catalyses pyridoxamine 5'-phosphate + O2 + H2O = pyridoxal 5'-phosphate + H2O2 + NH4(+). The catalysed reaction is pyridoxine 5'-phosphate + O2 = pyridoxal 5'-phosphate + H2O2. It functions in the pathway cofactor metabolism; pyridoxal 5'-phosphate salvage; pyridoxal 5'-phosphate from pyridoxamine 5'-phosphate: step 1/1. Its pathway is cofactor metabolism; pyridoxal 5'-phosphate salvage; pyridoxal 5'-phosphate from pyridoxine 5'-phosphate: step 1/1. Functionally, catalyzes the oxidation of either pyridoxine 5'-phosphate (PNP) or pyridoxamine 5'-phosphate (PMP) into pyridoxal 5'-phosphate (PLP). This chain is Pyridoxine/pyridoxamine 5'-phosphate oxidase, found in Acaryochloris marina (strain MBIC 11017).